We begin with the raw amino-acid sequence, 68 residues long: Large ribosomal subunit protein uL29 (68 aa).

The protein belongs to the universal ribosomal protein uL29 family.

This is Large ribosomal subunit protein uL29 from Bradyrhizobium diazoefficiens (strain JCM 10833 / BCRC 13528 / IAM 13628 / NBRC 14792 / USDA 110).